Consider the following 414-residue polypeptide: Nuclear pore complex-interacting protein family member B7 (414 aa).

Residues 1–18 (MRLRFWLLIWLLLGFISH) form the signal peptide. N-linked (GlcNAc...) asparagine glycosylation occurs at asparagine 111. 2 disordered regions span residues 242-262 (RMGR…NSLS) and 335-402 (SPLP…LRTR). The span at 252 to 262 (QQHSITDNSLS) shows a compositional bias: polar residues. Over residues 356–384 (EVEKPPKPKRWRVDEVEQSPKPKRQREAE) the composition is skewed to basic and acidic residues. Residues 390–402 (KPKRRRLSKLRTR) show a composition bias toward basic residues.

The protein belongs to the NPIP family.

The protein localises to the secreted. This Homo sapiens (Human) protein is Nuclear pore complex-interacting protein family member B7 (NPIPB7).